Here is a 173-residue protein sequence, read N- to C-terminus: Alpha-crystallin A chain (173 aa).

M1 bears the N-acetylmethionine mark. The tract at residues 1-63 (MDVTIQHPWF…RTVLDSGISE (63 aa)) is required for complex formation with BFSP1 and BFSP2. A Deamidated glutamine; partial modification is found at Q6. A Phosphoserine modification is found at S45. Position 50 is a deamidated glutamine; partial (Q50). Positions 52–162 (LFRTVLDSGI…GHSERAIPVS (111 aa)) constitute a sHSP domain. An N6-acetyllysine mark is found at K70 and K99. H100 contributes to the Zn(2+) binding site. N101 carries the post-translational modification Deamidated asparagine; partial. E102 and H107 together coordinate Zn(2+). Residue S122 is modified to Phosphoserine. N123 is modified (deamidated asparagine; partial). Residues 145 to 173 (KVQSGLDAGHSERAIPVSREEKPSSAPSS) are disordered. Q147 is subject to Deamidated glutamine; partial. Residues 153–167 (GHSERAIPVSREEKP) show a composition bias toward basic and acidic residues. Residue H154 participates in Zn(2+) binding. An O-linked (GlcNAc) serine glycan is attached at S162.

This sequence belongs to the small heat shock protein (HSP20) family. As to quaternary structure, heteromer composed of three CRYAA and one CRYAB subunits. Inter-subunit bridging via zinc ions enhances stability, which is crucial as there is no protein turn over in the lens. Can also form homodimers and homotetramers (dimers of dimers) which serve as the building blocks of homooligomers. Within homooligomers, the zinc-binding motif is created from residues of 3 different molecules. His-100 and Glu-102 from one molecule are ligands of the zinc ion, and His-107 and His-154 residues from additional molecules complete the site with tetrahedral coordination geometry. Part of a complex required for lens intermediate filament formation composed of BFSP1, BFSP2 and CRYAA. In terms of processing, acetylation at Lys-70 may increase chaperone activity. Undergoes age-dependent proteolytical cleavage at the C-terminus.

It is found in the cytoplasm. Its subcellular location is the nucleus. Functionally, contributes to the transparency and refractive index of the lens. Acts as a chaperone, preventing aggregation of various proteins under a wide range of stress conditions. Required for the correct formation of lens intermediate filaments as part of a complex composed of BFSP1, BFSP2 and CRYAA. The chain is Alpha-crystallin A chain (CRYAA) from Meriones unguiculatus (Mongolian jird).